A 229-amino-acid chain; its full sequence is Bcl-2-like protein 1 (229 aa).

The short motif at 4 to 24 (SNRELVIDFVSYKLSQRGHCW) is the BH4 element. The short motif at 82 to 96 (VRQALRDAGDEFELR) is the BH3 element. The BH1 motif lies at 125-144 (ELFHDGVNWGRIVAFFSFGG). The BH2 signature appears at 176 to 191 (PWIQENGGWERFVDLY). The chain crosses the membrane as a helical span at residues 206–223 (FNKWLLTGATVAGVLLLG).

This sequence belongs to the Bcl-2 family. As to expression, highest expression in organs with lymphoid development.

It localises to the mitochondrion membrane. The protein resides in the nucleus membrane. The protein localises to the mitochondrion matrix. Its subcellular location is the cytoplasm. It is found in the cytoskeleton. It localises to the microtubule organizing center. The protein resides in the centrosome. The protein localises to the cytosol. Its subcellular location is the cytoplasmic vesicle. It is found in the secretory vesicle. It localises to the synaptic vesicle membrane. Its function is as follows. Dominant regulator of apoptotic cell death. The long form displays cell death repressor activity, whereas the short isoform promotes apoptosis. Also acts as a regulator of G2 checkpoint and progression to cytokinesis during mitosis. The polypeptide is Bcl-2-like protein 1 (BCL2L1) (Gallus gallus (Chicken)).